Here is a 393-residue protein sequence, read N- to C-terminus: Probable protein phosphatase 2C 68 (393 aa).

Residues 56-359 (DFSIAVVQAN…DDITVVVIFI (304 aa)) form the PPM-type phosphatase domain. 4 residues coordinate Mn(2+): aspartate 87, glycine 88, aspartate 291, and aspartate 350.

This sequence belongs to the PP2C family. Requires Mg(2+) as cofactor. It depends on Mn(2+) as a cofactor.

It carries out the reaction O-phospho-L-seryl-[protein] + H2O = L-seryl-[protein] + phosphate. The catalysed reaction is O-phospho-L-threonyl-[protein] + H2O = L-threonyl-[protein] + phosphate. May dephosphorylate and repress plasma membrane H(+)-ATPases (PM H(+)-ATPases, e.g. AHA1 and AHA2), thus influencing negatively plant growth and fitness. The polypeptide is Probable protein phosphatase 2C 68 (Arabidopsis thaliana (Mouse-ear cress)).